Consider the following 160-residue polypeptide: Putative antiporter subunit mnhE2 (160 aa).

3 helical membrane-spanning segments follow: residues 22–42 (HFKFSTFFSGYLIGLIVIYIL), 55–75 (IWVAIKFLGVYLYQLITSSIS), and 100–120 (SDWAITFLTILIIITPGSTVI).

Belongs to the CPA3 antiporters (TC 2.A.63) subunit E family. May form a heterooligomeric complex that consists of seven subunits: mnhA2, mnhB2, mnhC2, mnhD2, mnhE2, mnhF2 and mnhG2.

Its subcellular location is the cell membrane. The sequence is that of Putative antiporter subunit mnhE2 (mnhE2) from Staphylococcus aureus (strain Mu3 / ATCC 700698).